The primary structure comprises 416 residues: Multifunctional CCA protein (416 aa).

The ATP site is built by G8 and R11. CTP is bound by residues G8 and R11. Residues D21 and D23 each coordinate Mg(2+). R91, R137, and R140 together coordinate ATP. Residues R91, R137, and R140 each contribute to the CTP site. In terms of domain architecture, HD spans 228-329 (TGVHTLMVLA…VKIFDKADFW (102 aa)).

The protein belongs to the tRNA nucleotidyltransferase/poly(A) polymerase family. Bacterial CCA-adding enzyme type 1 subfamily. Monomer. Can also form homodimers and oligomers. The cofactor is Mg(2+). Requires Ni(2+) as cofactor.

It catalyses the reaction a tRNA precursor + 2 CTP + ATP = a tRNA with a 3' CCA end + 3 diphosphate. It carries out the reaction a tRNA with a 3' CCA end + 2 CTP + ATP = a tRNA with a 3' CCACCA end + 3 diphosphate. In terms of biological role, catalyzes the addition and repair of the essential 3'-terminal CCA sequence in tRNAs without using a nucleic acid template. Adds these three nucleotides in the order of C, C, and A to the tRNA nucleotide-73, using CTP and ATP as substrates and producing inorganic pyrophosphate. tRNA 3'-terminal CCA addition is required both for tRNA processing and repair. Also involved in tRNA surveillance by mediating tandem CCA addition to generate a CCACCA at the 3' terminus of unstable tRNAs. While stable tRNAs receive only 3'-terminal CCA, unstable tRNAs are marked with CCACCA and rapidly degraded. The chain is Multifunctional CCA protein from Shewanella baltica (strain OS155 / ATCC BAA-1091).